The chain runs to 311 residues: Ciliary microtubule inner protein 2B (311 aa).

Disordered stretches follow at residues 64 to 93 (PFPP…LGDP) and 150 to 183 (QEGR…APFM).

The protein belongs to the CIMIP2 family. Expressed in airway epithelial cells.

It localises to the cytoplasm. The protein resides in the cytoskeleton. The protein localises to the cilium axoneme. In terms of biological role, microtubule inner protein (MIP) part of the dynein-decorated doublet microtubules (DMTs) in cilia axoneme, which is required for motile cilia beating. This is Ciliary microtubule inner protein 2B (cimip2b) from Xenopus laevis (African clawed frog).